The sequence spans 861 residues: FO synthase (861 aa).

2 Radical SAM core domains span residues 69-319 (ITYS…LQAP) and 528-763 (VTYI…LLHP). The segment at 70–401 (TYSKSVFIPL…PRLLPHVRAL (332 aa)) is cofG-like. [4Fe-4S] cluster is bound by residues C83, C87, C90, C542, C546, and C549. The tract at residues 505–838 (DGPALDALTR…KPRTTLYGEV (334 aa)) is cofH-like.

In the N-terminal section; belongs to the radical SAM superfamily. CofG family. It in the C-terminal section; belongs to the radical SAM superfamily. CofH family. The cofactor is [4Fe-4S] cluster.

The enzyme catalyses 5-amino-6-(D-ribitylamino)uracil + L-tyrosine + S-adenosyl-L-methionine = 5-amino-5-(4-hydroxybenzyl)-6-(D-ribitylimino)-5,6-dihydrouracil + 2-iminoacetate + 5'-deoxyadenosine + L-methionine + H(+). It carries out the reaction 5-amino-5-(4-hydroxybenzyl)-6-(D-ribitylimino)-5,6-dihydrouracil + S-adenosyl-L-methionine = 7,8-didemethyl-8-hydroxy-5-deazariboflavin + 5'-deoxyadenosine + L-methionine + NH4(+) + H(+). It participates in cofactor biosynthesis; coenzyme F0 biosynthesis. Its function is as follows. Catalyzes the radical-mediated synthesis of 7,8-didemethyl-8-hydroxy-5-deazariboflavin (FO) from 5-amino-6-(D-ribitylamino)uracil and L-tyrosine. The chain is FO synthase (fbiC) from Streptomyces avermitilis (strain ATCC 31267 / DSM 46492 / JCM 5070 / NBRC 14893 / NCIMB 12804 / NRRL 8165 / MA-4680).